The following is a 344-amino-acid chain: GTP 3',8-cyclase (344 aa).

Positions 19–245 (PFGRAVTYLR…DIPYRTGGPA (227 aa)) constitute a Radical SAM core domain. GTP is bound at residue Arg-28. Positions 35 and 39 each coordinate [4Fe-4S] cluster. Position 41 (Tyr-41) interacts with S-adenosyl-L-methionine. Position 42 (Cys-42) interacts with [4Fe-4S] cluster. Arg-77 is a binding site for GTP. Position 81 (Gly-81) interacts with S-adenosyl-L-methionine. Residue Thr-111 coordinates GTP. Ser-135 provides a ligand contact to S-adenosyl-L-methionine. Residue Lys-171 coordinates GTP. Position 205 (Met-205) interacts with S-adenosyl-L-methionine. [4Fe-4S] cluster contacts are provided by Cys-268 and Cys-271. 273–275 (RVR) lines the GTP pocket. A [4Fe-4S] cluster-binding site is contributed by Cys-285.

This sequence belongs to the radical SAM superfamily. MoaA family. As to quaternary structure, monomer and homodimer. Requires [4Fe-4S] cluster as cofactor.

It catalyses the reaction GTP + AH2 + S-adenosyl-L-methionine = (8S)-3',8-cyclo-7,8-dihydroguanosine 5'-triphosphate + 5'-deoxyadenosine + L-methionine + A + H(+). Its pathway is cofactor biosynthesis; molybdopterin biosynthesis. Its function is as follows. Catalyzes the cyclization of GTP to (8S)-3',8-cyclo-7,8-dihydroguanosine 5'-triphosphate. This chain is GTP 3',8-cyclase, found in Brucella melitensis biotype 2 (strain ATCC 23457).